The chain runs to 776 residues: Ent-8-alpha-hydroxylabd-13-en-15-yl diphosphate synthase CPS4, chloroplastic (776 aa).

The N-terminal 60 residues, 1-60, are a transit peptide targeting the chloroplast; it reads MSFASNATGFRIPLTTCVYPSPILRFNAKVGSGSSYGTTEAQRNMKCVDGIGRSRVVAVA. Position 226 (Lys-226) interacts with substrate. Residues Asp-357 and Asp-359 each coordinate Mg(2+). A DXDD motif motif is present at residues 357 to 360; sequence DSDD. Lys-443 provides a ligand contact to substrate.

It belongs to the terpene synthase family. It depends on Mg(2+) as a cofactor.

The protein localises to the plastid. It is found in the chloroplast. The catalysed reaction is ent-8alpha-hydroxylabd-13-en-15-yl diphosphate = (2E,6E,10E)-geranylgeranyl diphosphate + H2O. It participates in secondary metabolite biosynthesis; terpenoid biosynthesis. In terms of biological role, involved in diterpenoid biosynthesis. Catalyzes the conversion of all-trans-geranylgeranyl diphosphate to ent-8alpha-hydroxylabd-13-en-15-yl diphosphate. This is Ent-8-alpha-hydroxylabd-13-en-15-yl diphosphate synthase CPS4, chloroplastic from Salvia miltiorrhiza (Chinese sage).